Here is a 121-residue protein sequence, read N- to C-terminus: Small ribosomal subunit protein bS6 (121 aa).

The tract at residues 99-121 is disordered; the sequence is PSLMMRNVEREEARKTQQQEFAA. Basic and acidic residues predominate over residues 105–115; it reads NVEREEARKTQ.

It belongs to the bacterial ribosomal protein bS6 family.

Functionally, binds together with bS18 to 16S ribosomal RNA. The polypeptide is Small ribosomal subunit protein bS6 (Polaromonas naphthalenivorans (strain CJ2)).